A 389-amino-acid chain; its full sequence is Putative zinc finger CCCH domain-containing protein 10 (389 aa).

Positions 1–11 are enriched in polar residues; that stretch reads MANVSFTFDSQ. Positions 1–110 are disordered; the sequence is MANVSFTFDS…QDRRGSESRM (110 aa). 2 stretches are compositionally biased toward basic and acidic residues: residues 12–52 and 86–110; these read EQNK…RVSE and RSHETESRLWQRARTQDRRGSESRM. C3H1-type zinc fingers lie at residues 131–157 and 158–190; these read RPGEDNCLFYMKNHLCEWGSECCYNHP and PLQEIPCRIGKKLDCKAGACKRGSNCPFNHPKE. The tract at residues 183–296 is disordered; sequence CPFNHPKERD…ATATGKVSGK (114 aa). 2 stretches are compositionally biased toward basic and acidic residues: residues 204–243 and 251–284; these read PDLRRNDSGRRYNTESRSWPENKEKEVGQFRDHQDSKEDA and RPRDVEMRKRSRSPDFRAKTETKEHREAEERSSR.

The sequence is that of Putative zinc finger CCCH domain-containing protein 10 from Arabidopsis thaliana (Mouse-ear cress).